Reading from the N-terminus, the 374-residue chain is Queuine tRNA-ribosyltransferase (374 aa).

Catalysis depends on Asp90, which acts as the Proton acceptor. Residues 90–94 (DSGGF), Asp144, Gln193, and Gly220 each bind substrate. Residues 251–257 (GVGTPED) are RNA binding. Asp270 serves as the catalytic Nucleophile. The tract at residues 275–279 (TRNAR) is RNA binding; important for wobble base 34 recognition. The Zn(2+) site is built by Cys308, Cys310, Cys313, and His339.

Belongs to the queuine tRNA-ribosyltransferase family. Homodimer. Within each dimer, one monomer is responsible for RNA recognition and catalysis, while the other monomer binds to the replacement base PreQ1. Zn(2+) serves as cofactor.

The enzyme catalyses 7-aminomethyl-7-carbaguanine + guanosine(34) in tRNA = 7-aminomethyl-7-carbaguanosine(34) in tRNA + guanine. The protein operates within tRNA modification; tRNA-queuosine biosynthesis. Functionally, catalyzes the base-exchange of a guanine (G) residue with the queuine precursor 7-aminomethyl-7-deazaguanine (PreQ1) at position 34 (anticodon wobble position) in tRNAs with GU(N) anticodons (tRNA-Asp, -Asn, -His and -Tyr). Catalysis occurs through a double-displacement mechanism. The nucleophile active site attacks the C1' of nucleotide 34 to detach the guanine base from the RNA, forming a covalent enzyme-RNA intermediate. The proton acceptor active site deprotonates the incoming PreQ1, allowing a nucleophilic attack on the C1' of the ribose to form the product. After dissociation, two additional enzymatic reactions on the tRNA convert PreQ1 to queuine (Q), resulting in the hypermodified nucleoside queuosine (7-(((4,5-cis-dihydroxy-2-cyclopenten-1-yl)amino)methyl)-7-deazaguanosine). This is Queuine tRNA-ribosyltransferase from Campylobacter fetus subsp. fetus (strain 82-40).